A 1040-amino-acid chain; its full sequence is Contactin-2 (1040 aa).

A signal peptide spans 1 to 30 (MGTHARKKASLLLLVLATVALVSSPGWSFA). Ig-like C2-type domains are found at residues 39–130 (PIFE…AVLR), 135–224 (QEFS…SVFS), 241–324 (PSIK…GRII), 329–413 (PEWL…AELA), 419–506 (PDFR…GILS), and 511–605 (TKIT…ATVL). 4 disulfide bridges follow: C63/C113, C157/C209, C263/C308, and C350/C397. Residues N78, N200, and N206 are each glycosylated (N-linked (GlcNAc...) asparagine). N-linked (GlcNAc...) asparagine glycans are attached at residues N463, N479, N500, and N527. Fibronectin type-III domains are found at residues 612-710 (PPGG…TKEA), 715-812 (APSG…SAEE), 817-913 (APAK…VKPP), and 917-1008 (PPGN…NGGT). N-linked (GlcNAc...) asparagine glycosylation occurs at N777. The Cell attachment site motif lies at 796-798 (RGD). N832, N920, and N942 each carry an N-linked (GlcNAc...) asparagine glycan. A disordered region spans residues 895-921 (RAGTGPASPSADAMTVKPPPRRPPGNI). A lipid anchor (GPI-anchor amidated alanine) is attached at A1015. Positions 1016–1040 (AARPAHPGPAFSCMVILMLAGYQKL) are cleaved as a propeptide — removed in mature form.

Belongs to the immunoglobulin superfamily. Contactin family. In terms of tissue distribution, in neural tissues in embryos, and in adult brain, spinal cord and cerebellum.

It is found in the cell membrane. Its function is as follows. May play a role in the initial growth and guidance of axons. May be involved in cell adhesion. In conjunction with another transmembrane protein, CNTNAP2, contributes to the organization of axonal domains at nodes of Ranvier by maintaining voltage-gated potassium channels at the juxtaparanodal region. The sequence is that of Contactin-2 (Cntn2) from Rattus norvegicus (Rat).